The sequence spans 452 residues: uncharacterized protein (452 aa).

Residues 1-20 (MQFFGSLFVSLLGAAGLANA) form the signal peptide. Residues 130–151 (TQSSSNSTSTMNSTGSVSGGSV) are disordered.

The protein resides in the endoplasmic reticulum. This is an uncharacterized protein from Schizosaccharomyces pombe (strain 972 / ATCC 24843) (Fission yeast).